Consider the following 99-residue polypeptide: MPAKPAQDFFSLDANGQREALIIIKKLQCKILYSDKYYDDMFEYRHVILPKDLARLVPTSRLMSEMEWRQLGVQQSQGWVHYMIHKPEPHVLLFKRPRT.

The protein belongs to the CKS family. In terms of assembly, forms a homohexamer that can probably bind six kinase subunits.

Binds to the catalytic subunit of the cyclin dependent kinases (Cdc2) and is essential for their biological function. This is Cyclin-dependent kinases regulatory subunit from Leishmania mexicana.